Reading from the N-terminus, the 314-residue chain is uncharacterized protein (314 aa).

2 consecutive transmembrane segments (helical) span residues 23-43 and 98-118; these read LALG…MALF and MASG…GPLT. A compositionally biased stretch (gly residues) spans 165-184; the sequence is GLGSGAGGGDVGGGGAGGTT. Residues 165–314 are disordered; the sequence is GLGSGAGGGD…APDEKTDAGE (150 aa). Over residues 190–202 the composition is skewed to pro residues; that stretch reads GPPPVPTSSPPTT. Low complexity-rich tracts occupy residues 203–212 and 219–232; these read PAGAPTKSAT and ASPA…AGMP. A helical membrane pass occupies residues 221–241; sequence PASAHMGAAGMPMVPPGAMGA. Residues 294–314 are compositionally biased toward basic and acidic residues; it reads LLPEHKDFGRIAPDEKTDAGE.

The protein resides in the cell membrane. This is an uncharacterized protein from Mycobacterium tuberculosis (strain CDC 1551 / Oshkosh).